The primary structure comprises 51 residues: GFEVIAQAKLGGQTYTVALGREMVALAGAHTVGFARMGNLPPSAGAQLEIR.

His30 is a binding site for heme. Thr31 provides a ligand contact to Ca(2+).

The protein belongs to the peroxidase family. Classical plant (class III) peroxidase subfamily. It depends on heme b as a cofactor. Ca(2+) serves as cofactor.

The protein localises to the secreted. The enzyme catalyses 2 a phenolic donor + H2O2 = 2 a phenolic radical donor + 2 H2O. Removal of H(2)O(2), oxidation of toxic reductants, biosynthesis and degradation of lignin, suberization, auxin catabolism, response to environmental stresses such as wounding, pathogen attack and oxidative stress. These functions might be dependent on each isozyme/isoform in each plant tissue. In terms of biological role, suggested to catalyze the deposition of the aromatic residues of suberin on the cell wall and thus play a role in cell-suberization. The polypeptide is Suberization-associated anionic peroxidase 1 (Capsicum annuum (Capsicum pepper)).